An 862-amino-acid chain; its full sequence is Squamosa promoter-binding-like protein 1 (862 aa).

The disordered stretch occupies residues 55 to 98 (KRRRVSPEDDDGEECINAATTNGDDGQISGQRGRSSEDEMPRQG). Positions 72–87 (AATTNGDDGQISGQRG) are enriched in polar residues. The segment at 104–181 (GPCCQVDGCT…AQHNRRRRKV (78 aa)) adopts an SBP-type zinc-finger fold. The Zn(2+) site is built by Cys107, Cys112, Cys129, His132, Cys148, Cys151, His155, and Cys167. The Bipartite nuclear localization signal motif lies at 164-180 (KKSCRSRLAQHNRRRRK).

As to expression, ubiquitous.

Its subcellular location is the nucleus. Trans-acting factor that binds specifically to the consensus nucleotide sequence 5'-TNCGTACAA-3'. The protein is Squamosa promoter-binding-like protein 1 (SPL1) of Oryza sativa subsp. japonica (Rice).